The sequence spans 382 residues: 2-epi-valiolone synthase (382 aa).

Residues 92-95, 124-128, 148-149, K161, K170, and 188-191 contribute to the NAD(+) site; these read EKSK, GVVVD, TT, and HLRT. E203, H266, and H283 together coordinate Zn(2+).

This sequence belongs to the sugar phosphate cyclases superfamily. EVS family. It depends on NAD(+) as a cofactor. The cofactor is Co(2+). Requires Zn(2+) as cofactor.

The catalysed reaction is D-sedoheptulose 7-phosphate = 2-epi-valiolone + phosphate. Catalyzes the conversion of sedoheptulose 7-phosphate to 2-epi-valiolone, which may serve as an alternative precursor for aminocyclitol biosynthesis. The protein is 2-epi-valiolone synthase of Actinosynnema mirum (strain ATCC 29888 / DSM 43827 / JCM 3225 / NBRC 14064 / NCIMB 13271 / NRRL B-12336 / IMRU 3971 / 101).